The chain runs to 385 residues: T-box transcription factor TBX10 (385 aa).

Positions 22 to 61 are disordered; that stretch reads TTSSGWEPRLGSPFPSGPCTSSTGAQAVAEPTGQGPKNPR. Positions 69–252 form a DNA-binding region, T-box; it reads LEMKPLWEEF…SNPFAKGFRE (184 aa).

Its subcellular location is the nucleus. Functionally, probable transcriptional regulator involved in developmental processes. The chain is T-box transcription factor TBX10 (TBX10) from Homo sapiens (Human).